Here is a 324-residue protein sequence, read N- to C-terminus: Geranylgeranyl pyrophosphate synthase dpmpD (324 aa).

Isopentenyl diphosphate-binding residues include Lys50, Arg53, and His82. The Mg(2+) site is built by Asp89 and Asp93. A dimethylallyl diphosphate-binding site is contributed by Arg98. Residue Arg99 coordinates isopentenyl diphosphate. 3 residues coordinate dimethylallyl diphosphate: Lys176, Thr177, and Gln210. Residue Asp213 coordinates Mg(2+). Dimethylallyl diphosphate-binding residues include Asn217, Lys227, and Lys237.

This sequence belongs to the FPP/GGPP synthase family. It depends on Mg(2+) as a cofactor.

It catalyses the reaction isopentenyl diphosphate + dimethylallyl diphosphate = (2E)-geranyl diphosphate + diphosphate. The catalysed reaction is isopentenyl diphosphate + (2E)-geranyl diphosphate = (2E,6E)-farnesyl diphosphate + diphosphate. It carries out the reaction isopentenyl diphosphate + (2E,6E)-farnesyl diphosphate = (2E,6E,10E)-geranylgeranyl diphosphate + diphosphate. Its pathway is secondary metabolite biosynthesis; terpenoid biosynthesis. In terms of biological role, geranylgeranyl pyrophosphate synthase; part of the gene cluster that mediates the biosynthesis of diterpenoid pyrones. The first step of the pathway is the synthesis of the alpha-pyrone moiety by the polyketide synthase dpmpA via condensation of one acetyl-CoA starter unit with 3 malonyl-CoA units and 2 methylations. The alpha-pyrone is then combined with geranylgeranyl pyrophosphate (GGPP) formed by the GGPP synthase dpmpD through the action of the prenyltransferase dpmpC to yield a linear alpha-pyrone diterpenoid. Subsequent steps in the diterpenoid pyrone biosynthetic pathway involve the decalin core formation, which is initiated by the epoxidation of the C10-C11 olefin by the FAD-dependent oxidoreductase dpmpE, and is followed by a cyclization cascade catalyzed by the terpene cyclase dpmpB. The short chain dehydrogenase/reductase dpmpG then oxidizes the 8S hydroxy group to a ketone and the short chain dehydrogenase/reductase dpmpH reduces the ketone to the 8R hydroxy group to yield higginsianin B. Higginsianin B is further methylated by the methyltransferase dpmpI to produce the intermediate named FDDP B. The cytochrome P450 monooxygenase dpmpJ then oxidizes the C-26 methyl to primary alcohol, producing the final diterpenoid pyrone with a C-26 primary alcohol on the gamma-pyrone moiety named FDDP C. This chain is Geranylgeranyl pyrophosphate synthase dpmpD, found in Macrophomina phaseolina (strain MS6) (Charcoal rot fungus).